The chain runs to 134 residues: Translation initiation factor 2 subunit beta (134 aa).

This sequence belongs to the eIF-2-beta/eIF-5 family. In terms of assembly, heterotrimer composed of an alpha, a beta and a gamma chain.

EIF-2 functions in the early steps of protein synthesis by forming a ternary complex with GTP and initiator tRNA. The chain is Translation initiation factor 2 subunit beta from Pyrobaculum neutrophilum (strain DSM 2338 / JCM 9278 / NBRC 100436 / V24Sta) (Thermoproteus neutrophilus).